Here is a 271-residue protein sequence, read N- to C-terminus: Formamidopyrimidine-DNA glycosylase (271 aa).

The active-site Schiff-base intermediate with DNA is the P2. The Proton donor role is filled by E3. K57 functions as the Proton donor; for beta-elimination activity in the catalytic mechanism. Residues H90, R109, and K151 each contribute to the DNA site. An FPG-type zinc finger spans residues 236–270 (HVYGRGGETCTQCGNLLSEIRLGQRTTVFCGICQT). R260 functions as the Proton donor; for delta-elimination activity in the catalytic mechanism.

Belongs to the FPG family. In terms of assembly, monomer. The cofactor is Zn(2+).

The enzyme catalyses Hydrolysis of DNA containing ring-opened 7-methylguanine residues, releasing 2,6-diamino-4-hydroxy-5-(N-methyl)formamidopyrimidine.. It catalyses the reaction 2'-deoxyribonucleotide-(2'-deoxyribose 5'-phosphate)-2'-deoxyribonucleotide-DNA = a 3'-end 2'-deoxyribonucleotide-(2,3-dehydro-2,3-deoxyribose 5'-phosphate)-DNA + a 5'-end 5'-phospho-2'-deoxyribonucleoside-DNA + H(+). Its function is as follows. Involved in base excision repair of DNA damaged by oxidation or by mutagenic agents. Acts as a DNA glycosylase that recognizes and removes damaged bases. Has a preference for oxidized purines, such as 7,8-dihydro-8-oxoguanine (8-oxoG). Has AP (apurinic/apyrimidinic) lyase activity and introduces nicks in the DNA strand. Cleaves the DNA backbone by beta-delta elimination to generate a single-strand break at the site of the removed base with both 3'- and 5'-phosphates. The polypeptide is Formamidopyrimidine-DNA glycosylase (Shewanella sp. (strain MR-4)).